A 119-amino-acid polypeptide reads, in one-letter code: Large ribosomal subunit protein bL20 (119 aa).

Belongs to the bacterial ribosomal protein bL20 family.

Its function is as follows. Binds directly to 23S ribosomal RNA and is necessary for the in vitro assembly process of the 50S ribosomal subunit. It is not involved in the protein synthesizing functions of that subunit. This Rhodopseudomonas palustris (strain ATCC BAA-98 / CGA009) protein is Large ribosomal subunit protein bL20.